We begin with the raw amino-acid sequence, 194 residues long: CASP-like protein 2C1 (194 aa).

Over 1 to 18 (MSSYMEAAAAARAAEAKT) the chain is Cytoplasmic. Residues 19 to 39 (EGLLRGACALLAAAAALLVGL) traverse the membrane as a helical segment. The Extracellular portion of the chain corresponds to 40 to 59 (NTQTETVLFIRKKATVKDVQ). The chain crosses the membrane as a helical span at residues 60-80 (ALWVLAMAAAAAAGYHLLQLL). Over 81-109 (RCFYLSRFADGKPCRHRRAIAWLCFLLDK) the chain is Cytoplasmic. Residues 110 to 130 (GCAYITFATTVAAAQACVVAL) form a helical membrane-spanning segment. At 131–151 (YGTHALQWTKLCNIYTRFCEQ) the chain is on the extracellular side. Residues 152–172 (VAGSLVCAMLAAVGTALLSVV) form a helical membrane-spanning segment. Topologically, residues 173-194 (SARNLFRLYPSMLSPPPSSFVG) are cytoplasmic.

This sequence belongs to the Casparian strip membrane proteins (CASP) family. Homodimer and heterodimers.

The protein resides in the cell membrane. The chain is CASP-like protein 2C1 from Oryza sativa subsp. japonica (Rice).